The sequence spans 569 residues: Urease subunit alpha (569 aa).

The 439-residue stretch at 131–569 folds into the Urease domain; it reads GGIDAHIHFI…VPMAQRYFLF (439 aa). Positions 136, 138, and 219 each coordinate Ni(2+). Lysine 219 bears the N6-carboxylysine mark. Histidine 221 contacts substrate. The Ni(2+) site is built by histidine 248 and histidine 274. Catalysis depends on histidine 322, which acts as the Proton donor. Aspartate 362 contacts Ni(2+).

The protein belongs to the metallo-dependent hydrolases superfamily. Urease alpha subunit family. As to quaternary structure, heterotrimer of UreA (gamma), UreB (beta) and UreC (alpha) subunits. Three heterotrimers associate to form the active enzyme. Ni cation serves as cofactor. Carboxylation allows a single lysine to coordinate two nickel ions.

It is found in the cytoplasm. It carries out the reaction urea + 2 H2O + H(+) = hydrogencarbonate + 2 NH4(+). Its pathway is nitrogen metabolism; urea degradation; CO(2) and NH(3) from urea (urease route): step 1/1. In Bacillus sp. (strain TB-90), this protein is Urease subunit alpha.